Consider the following 48-residue polypeptide: uncharacterized protein (48 aa).

The protein localises to the plastid. The protein resides in the cyanelle. This is an uncharacterized protein from Cyanophora paradoxa.